A 627-amino-acid chain; its full sequence is DNA topoisomerase 4 subunit B (627 aa).

Residues Tyr4, Asn41, Asp68, 109–115 (GLHGVGV), and Lys333 contribute to the ATP site. In terms of domain architecture, Toprim spans 412–525 (TELFIVEGDS…NGHIYIAQPP (114 aa)). Glu418, Asp490, and Asp492 together coordinate Mg(2+).

This sequence belongs to the type II topoisomerase family. ParE type 1 subfamily. As to quaternary structure, heterotetramer composed of ParC and ParE. Mg(2+) serves as cofactor. Requires Mn(2+) as cofactor. The cofactor is Ca(2+).

The enzyme catalyses ATP-dependent breakage, passage and rejoining of double-stranded DNA.. Its activity is regulated as follows. Pyrrolopyrimidines inhibit both GyrB and its paralog in topoisomerase IV (parE). In terms of biological role, topoisomerase IV is essential for chromosome segregation. It relaxes supercoiled DNA. Performs the decatenation events required during the replication of a circular DNA molecule. This is DNA topoisomerase 4 subunit B from Francisella tularensis subsp. holarctica (strain LVS).